Reading from the N-terminus, the 945-residue chain is Isoleucine--tRNA ligase (945 aa).

The 'HIGH' region signature appears at 66–76; sequence PYANGDIHLGH. Glu-581 contacts L-isoleucyl-5'-AMP. The 'KMSKS' region signature appears at 622–626; sequence KMSKS. ATP is bound at residue Lys-625. Zn(2+)-binding residues include Cys-908, Cys-911, Cys-928, and Cys-931.

It belongs to the class-I aminoacyl-tRNA synthetase family. IleS type 1 subfamily. Monomer. Zn(2+) is required as a cofactor.

It is found in the cytoplasm. It catalyses the reaction tRNA(Ile) + L-isoleucine + ATP = L-isoleucyl-tRNA(Ile) + AMP + diphosphate. In terms of biological role, catalyzes the attachment of isoleucine to tRNA(Ile). As IleRS can inadvertently accommodate and process structurally similar amino acids such as valine, to avoid such errors it has two additional distinct tRNA(Ile)-dependent editing activities. One activity is designated as 'pretransfer' editing and involves the hydrolysis of activated Val-AMP. The other activity is designated 'posttransfer' editing and involves deacylation of mischarged Val-tRNA(Ile). The polypeptide is Isoleucine--tRNA ligase (Burkholderia ambifaria (strain ATCC BAA-244 / DSM 16087 / CCUG 44356 / LMG 19182 / AMMD) (Burkholderia cepacia (strain AMMD))).